Here is a 100-residue protein sequence, read N- to C-terminus: uncharacterized protein (100 aa).

Residues 62–82 form a helical membrane-spanning segment; sequence IPIVIIVSIFILLIIGSISLY.

The protein localises to the membrane. This is an uncharacterized protein from Dictyostelium discoideum (Social amoeba).